A 250-amino-acid chain; its full sequence is Probable 2' cyclic ADP-D-ribose synthase TcpB (250 aa).

Positions 1–46 are disordered; that stretch reads MSKEKQAQSKAHKAQQAISSAKSLSTQKSKMSELERATRDGAAIGK. The interval 1–117 is necessary and sufficient for phosphoinositide binding; sequence MSKEKQAQSK…TASATMEAEE (117 aa). A compositionally biased stretch (low complexity) spans 14-23; sequence AQQAISSAKS. Residues 30–39 show a composition bias toward basic and acidic residues; that stretch reads KMSELERATR. The TIR domain occupies 117 to 250; sequence EEYDFFISHA…EIAKELHSLI (134 aa). The active site involves E192.

Homodimer; may also form oligomers. Interacts with host TIRAP. Interacts with host MYD88. Interaction with host MYD88 was not confirmed by another study. Interacts with host TLR4. Abolishes the interaction of host TIRAP with TLR4.

The protein localises to the secreted. The protein resides in the host cell membrane. It catalyses the reaction NAD(+) + H2O = ADP-D-ribose + nicotinamide + H(+). The catalysed reaction is NAD(+) = 2'cADPR + nicotinamide + H(+). In terms of biological role, virulence factor that interferes with host Toll-like receptor 2 (TLR2) and TLR4 signaling, resulting in the reduction of dendritic cell maturation, inhibition of pro-inflammatory cytokine secretion and impaired NF-kappa-B activation in macrophages. Interferes with host TLR4 signaling by abolishing host TLR4-TIRAP interaction (but not host TIRAP-MYD88 interaction) and its downstream signaling. Inhibits host TLR 2 induced NF-kappa-B activation and TNF (tumor necrosis factor) secretion. Binds phosphoinositide (PtdIns) via its N-terminal domain. Has NAD(+) hydrolase (NADase) activity, catalyzes cleavage of NAD(+) into ADP-D-ribose (ADPR) and nicotinamide. Also generates a cyclization variant of cyclic ADPR (cADPR), termed v-cADPR (probably 2'cADPR). The chain is Probable 2' cyclic ADP-D-ribose synthase TcpB from Brucella melitensis biotype 1 (strain ATCC 23456 / CCUG 17765 / NCTC 10094 / 16M).